A 519-amino-acid polypeptide reads, in one-letter code: Ribonuclease Y (519 aa).

The helical transmembrane segment at 3 to 23 (PMTVLISILLTLLGLVVGYYV) threads the bilayer. One can recognise a KH domain in the interval 209-272 (TVSVVNLPND…ETARIALDKL (64 aa)). Residues 335 to 428 (VLKHSMEVAF…VAAADALSAA (94 aa)) form the HD domain.

Belongs to the RNase Y family.

Its subcellular location is the cell membrane. Its function is as follows. Endoribonuclease that initiates mRNA decay. The protein is Ribonuclease Y of Bacillus velezensis (strain DSM 23117 / BGSC 10A6 / LMG 26770 / FZB42) (Bacillus amyloliquefaciens subsp. plantarum).